The following is a 985-amino-acid chain: Regulator of telomere elongation helicase 1 homolog (985 aa).

The Helicase ATP-binding domain maps to 7-303; that stretch reads AGIPVHFPFE…QDMGGDEPKD (297 aa). ATP is bound at residue 42 to 49; the sequence is SPTGTGKT. Positions 146, 164, 173, and 209 each coordinate [4Fe-4S] cluster. The DEAH box signature appears at 252–255; that stretch reads DEAH. The interval 858 to 884 is disordered; the sequence is GSSGMVKIHKRERSSPTQPESSSQVSK. The span at 872 to 882 shows a compositional bias: polar residues; the sequence is SPTQPESSSQV. T874 bears the Phosphothreonine mark.

Belongs to the helicase family. RAD3/XPD subfamily.

The protein resides in the nucleus. The enzyme catalyses ATP + H2O = ADP + phosphate + H(+). Its function is as follows. A probable ATP-dependent DNA helicase implicated in DNA repair and the maintenance of genomic stability. Acts as an anti-recombinase to counteract toxic recombination and limit crossover during meiosis. Regulates meiotic recombination and crossover homeostasis by physically dissociating strand invasion events and thereby promotes noncrossover repair by meiotic synthesis dependent strand annealing (SDSA) as well as disassembly of D loop recombination intermediates. This Drosophila yakuba (Fruit fly) protein is Regulator of telomere elongation helicase 1 homolog.